The primary structure comprises 484 residues: Protein arginine methyltransferase NDUFAF7 homolog, mitochondrial (484 aa).

A mitochondrion-targeting transit peptide spans 1–12 (MFRSITQRVIRN).

It belongs to the NDUFAF7 family. As to quaternary structure, homodimer. Interacts with ndufs2.

Its subcellular location is the mitochondrion. The enzyme catalyses L-arginyl-[protein] + 2 S-adenosyl-L-methionine = N(omega),N(omega)'-dimethyl-L-arginyl-[protein] + 2 S-adenosyl-L-homocysteine + 2 H(+). Functionally, involved in the assembly or stability of mitochondrial NADH:ubiquinone oxidoreductase complex (complex I). Acts as an arginine methyltransferase and probably acts by mediating arginine methylation of ndufs2. This is Protein arginine methyltransferase NDUFAF7 homolog, mitochondrial from Dictyostelium discoideum (Social amoeba).